The chain runs to 1018 residues: Thrombospondin type-1 domain-containing protein 4 (1018 aa).

An N-terminal signal peptide occupies residues 1–25 (MVSHFMGSLSVLCFLLLLGFQFVCP). The TSP type-1 1 domain maps to 53–307 (PGVWGAWGPW…YKLCNTNVCP (255 aa)). 3 disordered regions span residues 111–235 (SVPL…RSGL), 254–279 (PAASSLFHSPETSNNHGVGTHGATQS), and 534–623 (SPQV…NWKQ). Residues 187-200 (QRLRRQKLSSRHSR) are compositionally biased toward basic residues. Low complexity predominate over residues 201–210 (SQGASSARHG). The segment covering 259 to 279 (LFHSPETSNNHGVGTHGATQS) has biased composition (polar residues). Basic and acidic residues-rich tracts occupy residues 556–577 (RSQEEGEQKGRNEEKEDLRGEA) and 592–603 (RHPDRFSPHRPD). TSP type-1 domains follow at residues 676–737 (CPAF…KICS), 739–792 (WQIR…DMGP), 793–851 (CAKS…GPCT), 852–911 (GKVE…HLKP), and 912–968 (CGAK…QDCV). Residues 971-1008 (VDENCKDKYYNCNVVVQARLCVYNYYKTACCASCTRVA) form the PLAC domain.

Interacts with FBN1. May interact with TGFB1.

The protein localises to the secreted. It localises to the extracellular space. Its subcellular location is the extracellular matrix. In terms of biological role, promotes FBN1 matrix assembly. Attenuates TGFB signaling, possibly by accelerating the sequestration of large latent complexes of TGFB or active TGFB by FBN1 microfibril assembly, thereby negatively regulating the expression of TGFB regulatory targets, such as POSTN. This chain is Thrombospondin type-1 domain-containing protein 4 (THSD4), found in Homo sapiens (Human).